We begin with the raw amino-acid sequence, 545 residues long: Threonine--tRNA ligase catalytic subunit (545 aa).

Residues Asp-139–Pro-433 are catalytic. Cys-231, His-282, and His-410 together coordinate Zn(2+).

Belongs to the class-II aminoacyl-tRNA synthetase family. In terms of assembly, homodimer. Probably interacts with its editing subunit. Zn(2+) serves as cofactor.

The protein localises to the cytoplasm. The enzyme catalyses tRNA(Thr) + L-threonine + ATP = L-threonyl-tRNA(Thr) + AMP + diphosphate + H(+). In terms of biological role, catalyzes the attachment of threonine to tRNA(Thr) in a two-step reaction: L-threonine is first activated by ATP to form Thr-AMP and then transferred to the acceptor end of tRNA(Thr). Also activates L-serine and transfers it to tRNA(Thr) but cannot deacylate incorrectly charged amino acid; unlike most archaea the editing function is found in a freestanding protein. The protein is Threonine--tRNA ligase catalytic subunit of Saccharolobus islandicus (strain M.16.27) (Sulfolobus islandicus).